The sequence spans 953 residues: Coatomer subunit beta (953 aa).

7 HEAT repeats span residues 17–54 (DSEPPSEISLKNDLEKGDVKLKTEALKKVIIMILNGEK), 96–131 (QEMILVCDAYRKDLQHPNEFIRGSTLRFLCKLKEAE), 132–168 (LLEPLMPAIRACLEHRHSYVRRNAVLAIYTIYRNFEH), 240–276 (SERARFIRCIYNLLQSSSPAVKYEAAGTLVTLSSAPT), 277–314 (AIKAAAQCYIDLIIKESDNNVKLIVLDRLVELKEHPSH), 316–353 (RVLQDLVMDILRVLSTPDLEVRKKTLQLALDLVSSRNV), and 396–433 (DMAANVIPVLMEFLSDNNEAAAADVLEFVREAIQRFDN).

Oligomeric complex that consists of at least the alpha, beta, beta', gamma, delta, epsilon and zeta subunits.

The protein localises to the cytoplasm. Its subcellular location is the golgi apparatus membrane. It is found in the cytoplasmic vesicle. It localises to the COPI-coated vesicle membrane. Its function is as follows. The coatomer is a cytosolic protein complex that binds to dilysine motifs and reversibly associates with Golgi non-clathrin-coated vesicles, which further mediate biosynthetic protein transport from the ER, via the Golgi up to the trans Golgi network. Coatomer complex is required for budding from Golgi membranes, and is essential for the retrograde Golgi-to-ER transport of dilysine-tagged proteins. In Gallus gallus (Chicken), this protein is Coatomer subunit beta (COPB1).